A 334-amino-acid polypeptide reads, in one-letter code: Mediator of RNA polymerase II transcription subunit 4 (334 aa).

A coiled-coil region spans residues 76–100 (LIRTLKAHVEKRDEVIQQVENNLKA). Residues 188 to 203 (SSAQKPIIASPSASSS) show a composition bias toward low complexity. Disordered stretches follow at residues 188 to 234 (SSAQ…GYGA) and 252 to 334 (EKQW…GRNK). 2 stretches are compositionally biased toward polar residues: residues 204 to 225 (NGGT…TNGD) and 264 to 282 (ATSS…SSPS).

Belongs to the Mediator complex subunit 4 family. Component of the Mediator complex.

It is found in the nucleus. Its function is as follows. Component of the Mediator complex, a coactivator involved in the regulated transcription of nearly all RNA polymerase II-dependent genes. Mediator functions as a bridge to convey information from gene-specific regulatory proteins to the basal RNA polymerase II transcription machinery. Mediator is recruited to promoters by direct interactions with regulatory proteins and serves as a scaffold for the assembly of a functional preinitiation complex with RNA polymerase II and the general transcription factors. The sequence is that of Mediator of RNA polymerase II transcription subunit 4 (mdt-4) from Caenorhabditis briggsae.